Consider the following 488-residue polypeptide: Multidrug resistance outer membrane protein MdtP (488 aa).

A signal peptide spans 1-23; it reads MINRQLSRLLLCSILGSTTLISG. Residue Cys-24 is the site of N-palmitoyl cysteine attachment. The S-diacylglycerol cysteine moiety is linked to residue Cys-24.

This sequence belongs to the outer membrane factor (OMF) (TC 1.B.17) family. Could be part of a tripartite efflux system composed of MdtN, MdtO and MdtP.

The protein localises to the cell outer membrane. Could be involved in resistance to puromycin, acriflavine and tetraphenylarsonium chloride. This chain is Multidrug resistance outer membrane protein MdtP (mdtP), found in Escherichia coli O6:H1 (strain CFT073 / ATCC 700928 / UPEC).